Here is a 205-residue protein sequence, read N- to C-terminus: Holliday junction branch migration complex subunit RuvA (205 aa).

The domain I stretch occupies residues 1 to 64 (MIGKLRGLID…EDQIKLFGFR (64 aa)). The segment at 65-143 (SDVEREWFRL…AFANVDPGVV (79 aa)) is domain II. The tract at residues 144–154 (RLSGAIEESRA) is flexible linker. The tract at residues 154–205 (APQPVADAISALINLGYGQPQAAAAIAAASRAAGDKAETAQLIRLGLKELAK) is domain III.

Belongs to the RuvA family. In terms of assembly, homotetramer. Forms an RuvA(8)-RuvB(12)-Holliday junction (HJ) complex. HJ DNA is sandwiched between 2 RuvA tetramers; dsDNA enters through RuvA and exits via RuvB. An RuvB hexamer assembles on each DNA strand where it exits the tetramer. Each RuvB hexamer is contacted by two RuvA subunits (via domain III) on 2 adjacent RuvB subunits; this complex drives branch migration. In the full resolvosome a probable DNA-RuvA(4)-RuvB(12)-RuvC(2) complex forms which resolves the HJ.

It localises to the cytoplasm. In terms of biological role, the RuvA-RuvB-RuvC complex processes Holliday junction (HJ) DNA during genetic recombination and DNA repair, while the RuvA-RuvB complex plays an important role in the rescue of blocked DNA replication forks via replication fork reversal (RFR). RuvA specifically binds to HJ cruciform DNA, conferring on it an open structure. The RuvB hexamer acts as an ATP-dependent pump, pulling dsDNA into and through the RuvAB complex. HJ branch migration allows RuvC to scan DNA until it finds its consensus sequence, where it cleaves and resolves the cruciform DNA. This is Holliday junction branch migration complex subunit RuvA from Bradyrhizobium sp. (strain ORS 278).